Reading from the N-terminus, the 722-residue chain is Bifunctional UDP-N-acetylglucosamine 2-epimerase/N-acetylmannosamine kinase (722 aa).

Residues Arg-19, Ser-23, Arg-113, His-220, and Asn-253 each contribute to the UDP site. Lys-259, Glu-271, Lys-280, and His-281 together coordinate CMP-N-acetyl-beta-neuraminate. Residues Val-282, Ser-301, Ser-302, Glu-307, and Arg-321 each contribute to the UDP site. Positions Thr-406–His-722 are N-acetylmannosamine kinase. Asp-413 serves as a coordination point for Mg(2+). Gly-416 contributes to the an N-acyl-D-mannosamine 6-phosphate binding site. 3 residues coordinate ADP: Thr-417, Asn-418, and Arg-420. The an N-acyl-D-mannosamine 6-phosphate site is built by Gly-476, Arg-477, Thr-489, Asn-516, Asp-517, and Gly-545. The an N-acyl-D-mannosamine site is built by Gly-476, Arg-477, Thr-489, Asn-516, and Asp-517. Asp-517 is a catalytic residue. An N-acyl-D-mannosamine contacts are provided by Glu-566 and His-569. His-569 provides a ligand contact to an N-acyl-D-mannosamine 6-phosphate. Residues His-569, Cys-579, Cys-581, and Cys-586 each coordinate Zn(2+). Glu-588 lines the an N-acyl-D-mannosamine 6-phosphate pocket. Glu-588 lines the an N-acyl-D-mannosamine pocket.

This sequence in the N-terminal section; belongs to the UDP-N-acetylglucosamine 2-epimerase family. In the C-terminal section; belongs to the ROK (NagC/XylR) family. As to quaternary structure, homodimer. Homotetramer. Homohexamer. The hexameric form exhibits both enzyme activities, whereas the dimeric form only catalyzes the phosphorylation of N-acyl-D-mannosamine. Phosphorylated. Phosphorylation by PKC activates the UDP-N-acetylglucosamine 2-epimerase activity. In terms of tissue distribution, widely expressed. Highest expression is observed in liver.

Its subcellular location is the cytoplasm. It is found in the cytosol. It catalyses the reaction UDP-N-acetyl-alpha-D-glucosamine + H2O = aldehydo-N-acetyl-D-mannosamine + UDP + H(+). It carries out the reaction an N-acyl-D-mannosamine + ATP = an N-acyl-D-mannosamine 6-phosphate + ADP + H(+). Its pathway is amino-sugar metabolism; N-acetylneuraminate biosynthesis. Its activity is regulated as follows. The UDP-N-acetylglucosamine 2-epimerase activity, in contrast to the N-acetylmannosamine kinase activity, exhibits allosteric regulation by cytidine monophosphate-N-acetylneuraminic acid (CMP-Neu5Ac), the end product of neuraminic acid biosynthesis. Moreover, the activity is contingent upon the oligomeric state of the enzyme. The monomeric form is inactive, while the dimeric form selectively catalyzes the phosphorylation of N-acetylmannosamine. The hexameric form, on the other hand, demonstrates full proficiency in both enzyme activities. Furthermore, the UDP-N-acetylglucosamine 2-epimerase activity is increased by PKC-mediated phosphorylation. Its function is as follows. Bifunctional enzyme that possesses both UDP-N-acetylglucosamine 2-epimerase and N-acetylmannosamine kinase activities, and serves as the initiator of the biosynthetic pathway leading to the production of N-acetylneuraminic acid (NeuAc), a critical precursor in the synthesis of sialic acids. By catalyzing this pivotal and rate-limiting step in sialic acid biosynthesis, this enzyme assumes a pivotal role in governing the regulation of cell surface sialylation. Sialic acids represent a category of negatively charged sugars that reside on the surface of cells as terminal components of glycoconjugates and mediate important functions in various cellular processes, including cell adhesion, signal transduction, and cellular recognition. The protein is Bifunctional UDP-N-acetylglucosamine 2-epimerase/N-acetylmannosamine kinase of Rattus norvegicus (Rat).